Consider the following 343-residue polypeptide: Phenylalanine--tRNA ligase alpha subunit (343 aa).

E268 is a binding site for Mg(2+).

This sequence belongs to the class-II aminoacyl-tRNA synthetase family. Phe-tRNA synthetase alpha subunit type 1 subfamily. Tetramer of two alpha and two beta subunits. Mg(2+) is required as a cofactor.

It localises to the cytoplasm. The catalysed reaction is tRNA(Phe) + L-phenylalanine + ATP = L-phenylalanyl-tRNA(Phe) + AMP + diphosphate + H(+). This is Phenylalanine--tRNA ligase alpha subunit from Cupriavidus necator (strain ATCC 17699 / DSM 428 / KCTC 22496 / NCIMB 10442 / H16 / Stanier 337) (Ralstonia eutropha).